Consider the following 432-residue polypeptide: Teosinte glume architecture 1 (432 aa).

Disordered stretches follow at residues 20–55 (HAAAAPSSGGHAANAAAAGTGTESRPPAPGAAGAPA) and 68–102 (ECEPGAARREREAAAGAAKRPRPAGPGGQQQQQQC). The span at 22–41 (AAAPSSGGHAANAAAAGTGT) shows a compositional bias: low complexity. The SBP-type zinc-finger motif lies at 102 to 179 (CPSCAVDGCR…DGHNRRRRKP (78 aa)). Cysteine 105, cysteine 110, cysteine 127, histidine 130, cysteine 146, cysteine 149, histidine 153, and cysteine 165 together coordinate Zn(2+). Residues 409–420 (GGGSGGGEGSSD) show a composition bias toward gly residues. Residues 409–432 (GGGSGGGEGSSDGGTSSSMPFSWQ) form a disordered region.

Monomer and homodimer. As to expression, strongly expressed in immature ears and weakly in husks. Found in the inflorescence meristem of the developing ear, in the spikelet pair primordia, the glume primordia, the cupule forming region and other floral organs. Not detected in other tissues.

Its function is as follows. SBP transcriptional regulator probably involved in the domestication of maize. Acts as a transcriptional repressor binding to a 5'-GTAC-3' motif. May repress the growth of lateral branches in length and numbers. This is Teosinte glume architecture 1 from Zea mays (Maize).